The chain runs to 366 residues: Cellular tumor antigen p53 (366 aa).

Positions 1 to 41 (MMDEQGLDGMQILPGSQDSFSELWASVQTPSIATIAEEFDD) are transcription activation (acidic). The DNA-binding element occupies 80–267 (DYPGEYGFQL…KTDEESSTKT (188 aa)). Zn(2+)-binding residues include Cys154, His157, Cys213, and Cys217. The segment at 248 to 255 (RVCACPGR) is interaction with DNA. The span at 255–264 (RDRKTDEESS) shows a compositional bias: basic and acidic residues. Residues 255-305 (RDRKTDEESSTKTPNGPKQTKKRKQAPSNSAPHTTTVMKSKSSSSAEEEDK) are disordered. The Bipartite nuclear localization signal signature appears at 275–295 (KKRKQAPSNSAPHTTTVMKSK). Positions 280–292 (APSNSAPHTTTVM) are enriched in polar residues. The interval 305–336 (KEVFTVLVKGRERYEIIKKINEAFEGAAEKEK) is oligomerization. Residues 319–330 (EIIKKINEAFEG) carry the Nuclear export signal motif. The interval 332–366 (AEKEKAKNKVAVKQELPVPSSGKRLVQRGERSDSD) is disordered. Residues 341 to 362 (VAVKQELPVPSSGKRLVQRGER) are basic (repression of DNA-binding).

This sequence belongs to the p53 family. As to quaternary structure, binds DNA as a homotetramer. Zn(2+) is required as a cofactor.

Its subcellular location is the cytoplasm. The protein resides in the nucleus. Functionally, multifunctional transcription factor that induces cell cycle arrest, DNA repair or apoptosis upon binding to its target DNA sequence. Acts as a tumor suppressor in many tumor types; induces growth arrest or apoptosis depending on the physiological circumstances and cell type. Negatively regulates cell division by controlling expression of a set of genes required for this process. One of the activated genes is an inhibitor of cyclin-dependent kinases. Apoptosis induction seems to be mediated either by stimulation of BAX and FAS antigen expression, or by repression of Bcl-2 expression. In Platichthys flesus (European flounder), this protein is Cellular tumor antigen p53 (tp53).